A 1440-amino-acid polypeptide reads, in one-letter code: MGKTYSSPVNPIPKAPKGLAIHHWLNFLQAAYRLQPGPSEFDFHQLRKFLKLAIKTPVWLNPINYSVLARLIPKNYPGRVHEIVAILIQETPAREAPPSAPPADDPQKPPPYPEHAQVEPQCLPVLHPHGAPATHRPWQMKDLQAIKQEVSSSAPGSPQFMQTVRLAVQQFDPTAKDLHDLLQYLCSSLVASLHHQQLETLIAQAETQGITGYNPLAGPLRVQANNPNQQGLRREYQNLWLSAFSALPGNTKDPTWAAILQGPEEPFCSFVERLNVALDNGLPEGTPKDPILRSLAYSNANKECQKLLQARGQTNSPLGEMLRACQTWTPRDKNKILMIQPKKTPPPNQPCFRCGQAGHWSRDCKQPRPPPGPCPLCQDPAHWKQDCPQLKADTKGSEDLLLDLPCEASHVRERKNLLRGGGLTSPRTILPLIPLSQQRQPILHVQVSFSNTSPVGVQALLDTGADITVLPAYLCPPDSNLQDTTVLGAGGPSTSKFKILPRPVHIHLPFRKQPVTLTSCLIDTNDQWTILGRDALQQCQSSLYLADQPSSVLPVQTPKLIGLEHLPPPPEVSQFPLNPERLQALTDLVSRALEAKHIEPYQGPGNNPIFPVKKPNGKWRFIHDLRATNSLTRDLASPSPGPPDLTSLPQDLPHLRTIDLTDAFFQIPLPAVFQPYFAFTLPQPNNHGPGTRYSWRVLPQGFKNSPTLFEQQLSHILAPVRKAFPNSLIIQYMDDILLASPALRELTALTDKVTNALTKEGLPMSLEKTQATPGSIHFLGQVISPDCITYETLPSIHVKSIWSLAELQSMLGELQWVSKGTPVLRSSLHQLYLALRGHRDPRDTIELTSTQVQALKTIQKALALNCRSRLVSQLPILALIILRPTGTTAVLFQTKQKWPLVWLHTPHPATSLRPWGQLLANAIITLDKYSLQHYGQICKSFHHNISNQALTYYLHTSDQSSVAILLQHSHRFHNLGAQPSGPWRSLLQVPQIFQNIDVLRPPFIISPVVIDHAPCLFSDGATSKAAFILWDKQVIHQQVLPLPSTCSAQAGELFGLLAGLQKSKPWPALNIFLDSKFLIGHLRRMALGAFLGPSTQCDLHARLFPLLQGKTVYVHHVRSHTLLQDPISRLNEATDALMLAPLLPLNPTTLHQITHCNPHALRNHGATASEAHAIVQACHTCKVINPQGRLPQGYIRRGHAPNVIWQGDVTHLHYKRYKYCLLVWVDTYSGVVSVSCRRKETGSDCVVSLLAAISILGKPHSINTDNGTAYLSQEFQQFCSSLSIKHSTHVPYNPTSSGLVERTNGILKTLISKYLLDNHHLPLETAISKSLWTINHLNVLPSCQKTRWQLHQAQPLPSIPENTLPPRASPKWYYYKIPGLTNPRWSGPVQSLKEAAGAALIPVGGSHLWIPWRLLKRGICPRPESNAVADPETKDHQLHG.

Residue glycine 2 is the site of N-myristoyl glycine; by host attachment. The tract at residues 93–117 (AREAPPSAPPADDPQKPPPYPEHAQ) is disordered. The PTAP/PSAP motif signature appears at 98–101 (PSAP). The segment covering 98–113 (PSAPPADDPQKPPPYP) has biased composition (pro residues). Positions 109-112 (PPPY) match the PPXY motif motif. 2 consecutive CCHC-type zinc fingers follow at residues 349 to 366 (QPCF…DCKQ) and 372 to 389 (GPCP…DCPQ). The Peptidase A2 domain occupies 457–535 (VQALLDTGAD…DQWTILGRDA (79 aa)). Aspartate 462 acts as the For protease activity; shared with dimeric partner in catalysis. The Reverse transcriptase domain occupies 593–783 (LEAKHIEPYQ…GSIHFLGQVI (191 aa)). Residues aspartate 659, aspartate 734, aspartate 735, aspartate 1019, glutamate 1052, aspartate 1074, aspartate 1135, aspartate 1208, and aspartate 1265 each coordinate Mg(2+). Residues 1010–1143 (IDHAPCLFSD…TDALMLAPLL (134 aa)) form the RNase H type-1 domain. Residues 1197–1366 (RGHAPNVIWQ…PSIPENTLPP (170 aa)) enclose the Integrase catalytic domain. The segment at residues 1371–1420 (KWYYYKIPGLTNPRWSGPVQSLKEAAGAALIPVGGSHLWIPWRLLKRGIC) is a DNA-binding region (integrase-type).

Interacts with human TSG101. This interaction is essential for budding and release of viral particles. It depends on Mg(2+) as a cofactor. Specific enzymatic cleavages by the viral protease yield mature proteins. The polyprotein is cleaved during and after budding, this process is termed maturation. The protease is autoproteolytically processed at its N- and C-termini.

It is found in the virion. The enzyme catalyses Endonucleolytic cleavage to 5'-phosphomonoester.. The catalysed reaction is DNA(n) + a 2'-deoxyribonucleoside 5'-triphosphate = DNA(n+1) + diphosphate. Matrix protein p19 targets Gag, Gag-Pro and Gag-Pro-Pol polyproteins to the plasma membrane via a multipartite membrane binding signal, that includes its myristoylated N-terminus. Also mediates nuclear localization of the preintegration complex. Functionally, capsid protein p24 forms the conical core of the virus that encapsulates the genomic RNA-nucleocapsid complex. In terms of biological role, nucleocapsid protein p15 is involved in the packaging and encapsidation of two copies of the genome. Its function is as follows. The aspartyl protease mediates proteolytic cleavages of Gag, Gag-Pro and Gag-Pro-Pol polyproteins during or shortly after the release of the virion from the plasma membrane. Cleavages take place as an ordered, step-wise cascade to yield mature proteins. This process is called maturation. Displays maximal activity during the budding process just prior to particle release from the cell. Hydrolyzes host EIF4GI in order to shut off the capped cellular mRNA translation. The resulting inhibition of cellular protein synthesis serves to ensure maximal viral gene expression and to evade host immune response. Reverse transcriptase (RT) is a multifunctional enzyme that converts the viral RNA genome into dsDNA in the cytoplasm, shortly after virus entry into the cell. This enzyme displays a DNA polymerase activity that can copy either DNA or RNA templates, and a ribonuclease H (RNase H) activity that cleaves the RNA strand of RNA-DNA heteroduplexes in a partially processive 3' to 5'-endonucleasic mode. Conversion of viral genomic RNA into dsDNA requires many steps. A tRNA-Pro binds to the primer-binding site (PBS) situated at the 5'-end of the viral RNA. RT uses the 3' end of the tRNA primer to perform a short round of RNA-dependent minus-strand DNA synthesis. The reading proceeds through the U5 region and ends after the repeated (R) region which is present at both ends of viral RNA. The portion of the RNA-DNA heteroduplex is digested by the RNase H, resulting in a ssDNA product attached to the tRNA primer. This ssDNA/tRNA hybridizes with the identical R region situated at the 3' end of viral RNA. This template exchange, known as minus-strand DNA strong stop transfer, can be either intra- or intermolecular. RT uses the 3' end of this newly synthesized short ssDNA to perform the RNA-dependent minus-strand DNA synthesis of the whole template. RNase H digests the RNA template except for a polypurine tract (PPT) situated at the 5' end of the genome. It is not clear if both polymerase and RNase H activities are simultaneous. RNase H probably can proceed both in a polymerase-dependent (RNA cut into small fragments by the same RT performing DNA synthesis) and a polymerase-independent mode (cleavage of remaining RNA fragments by free RTs). Secondly, RT performs DNA-directed plus-strand DNA synthesis using the PPT that has not been removed by RNase H as primer. PPT and tRNA primers are then removed by RNase H. The 3' and 5' ssDNA PBS regions hybridize to form a circular dsDNA intermediate. Strand displacement synthesis by RT to the PBS and PPT ends produces a blunt ended, linear dsDNA copy of the viral genome that includes long terminal repeats (LTRs) at both ends. Functionally, integrase catalyzes viral DNA integration into the host chromosome, by performing a series of DNA cutting and joining reactions. This enzyme activity takes place after virion entry into a cell and reverse transcription of the RNA genome in dsDNA. The first step in the integration process is 3' processing. This step requires a complex comprising the viral genome, matrix protein, and integrase. This complex is called the pre-integration complex (PIC). The integrase protein removes 2 nucleotides from each 3' end of the viral DNA, leaving recessed dinucleotides OH's at the 3' ends. In the second step, the PIC access cell chromosomes during cell division. The third step, termed strand transfer, the integrase protein joins the previously processed 3' ends to the 5'-ends of strands of target cellular DNA at the site of integration. The 5'-ends are produced by integrase-catalyzed staggered cuts, 5 bp apart. A Y-shaped, gapped, recombination intermediate results, with the 5'-ends of the viral DNA strands and the 3' ends of target DNA strands remaining unjoined, flanking a gap of 5 bp. The last step is viral DNA integration into host chromosome. This involves host DNA repair synthesis in which the 5 bp gaps between the unjoined strands (see above) are filled in and then ligated. The chain is Gag-Pro-Pol polyprotein (gag-pro-pol) from Human T-cell leukemia virus 3 (strain Pyl43) (HTLV-3).